The chain runs to 476 residues: ATP synthase subunit beta (476 aa).

ATP is bound at residue 161 to 168 (GGAGVGKT).

It belongs to the ATPase alpha/beta chains family. In terms of assembly, F-type ATPases have 2 components, CF(1) - the catalytic core - and CF(0) - the membrane proton channel. CF(1) has five subunits: alpha(3), beta(3), gamma(1), delta(1), epsilon(1). CF(0) has three main subunits: a(1), b(2) and c(9-12). The alpha and beta chains form an alternating ring which encloses part of the gamma chain. CF(1) is attached to CF(0) by a central stalk formed by the gamma and epsilon chains, while a peripheral stalk is formed by the delta and b chains.

The protein resides in the cell membrane. It catalyses the reaction ATP + H2O + 4 H(+)(in) = ADP + phosphate + 5 H(+)(out). Its function is as follows. Produces ATP from ADP in the presence of a proton gradient across the membrane. The catalytic sites are hosted primarily by the beta subunits. This is ATP synthase subunit beta from Mycolicibacterium gilvum (strain PYR-GCK) (Mycobacterium gilvum (strain PYR-GCK)).